The sequence spans 188 residues: Elongation factor P (188 aa).

K34 carries the post-translational modification N6-(3,6-diaminohexanoyl)-5-hydroxylysine.

The protein belongs to the elongation factor P family. In terms of processing, may be beta-lysylated on the epsilon-amino group of Lys-34 by the combined action of EpmA and EpmB, and then hydroxylated on the C5 position of the same residue by EpmC (if this protein is present). Lysylation is critical for the stimulatory effect of EF-P on peptide-bond formation. The lysylation moiety may extend toward the peptidyltransferase center and stabilize the terminal 3-CCA end of the tRNA. Hydroxylation of the C5 position on Lys-34 may allow additional potential stabilizing hydrogen-bond interactions with the P-tRNA.

It is found in the cytoplasm. Its pathway is protein biosynthesis; polypeptide chain elongation. Involved in peptide bond synthesis. Alleviates ribosome stalling that occurs when 3 or more consecutive Pro residues or the sequence PPG is present in a protein, possibly by augmenting the peptidyl transferase activity of the ribosome. Modification of Lys-34 is required for alleviation. This is Elongation factor P from Glaesserella parasuis serovar 5 (strain SH0165) (Haemophilus parasuis).